We begin with the raw amino-acid sequence, 388 residues long: Myosin light chain kinase family member 4 (388 aa).

Positions 106–361 (VSKTEILGGG…ASEALKHPWL (256 aa)) constitute a Protein kinase domain. Residues 112-120 (LGGGRFGQV) and K135 each bind ATP. D227 serves as the catalytic Proton acceptor.

Belongs to the protein kinase superfamily. CAMK Ser/Thr protein kinase family.

The catalysed reaction is L-seryl-[protein] + ATP = O-phospho-L-seryl-[protein] + ADP + H(+). It carries out the reaction L-threonyl-[protein] + ATP = O-phospho-L-threonyl-[protein] + ADP + H(+). In Homo sapiens (Human), this protein is Myosin light chain kinase family member 4 (MYLK4).